The chain runs to 834 residues: Ras GTPase-activating protein 3 (834 aa).

2 consecutive C2 domains span residues 1–112 and 123–263; these read MAVE…DTWF and VQGK…EAWY. Residue A2 is modified to N-acetylalanine. Position 66 is a phosphotyrosine (Y66). Residue S77 is modified to Phosphoserine. T110 bears the Phosphothreonine mark. A Ras-GAP domain is found at 346 to 561; the sequence is GRVVPFISAI…DAVKNFLDLI (216 aa). In terms of domain architecture, PH spans 576 to 677; that stretch reads ILLKEGFMIK…WIDILTKVSQ (102 aa). Residues 679-715 form a Btk-type zinc finger; sequence NQKRLTVFHPSAYLNGHWLCCRASSDTAAGCTPCTGG. Zn(2+) is bound by residues H687, C698, C699, and C709. A phosphoserine mark is found at S809 and S833.

In terms of tissue distribution, high levels in brain, lower in spleen and lung.

Its function is as follows. Inhibitory regulator of the Ras-cyclic AMP pathway. May bind inositol tetrakisphosphate (IP4). The protein is Ras GTPase-activating protein 3 (Rasa3) of Mus musculus (Mouse).